Consider the following 277-residue polypeptide: Bifunctional protein FolD (277 aa).

NADP(+) contacts are provided by residues 156–158 (GRS), Ser183, and Ile224.

The protein belongs to the tetrahydrofolate dehydrogenase/cyclohydrolase family. Homodimer.

It carries out the reaction (6R)-5,10-methylene-5,6,7,8-tetrahydrofolate + NADP(+) = (6R)-5,10-methenyltetrahydrofolate + NADPH. The catalysed reaction is (6R)-5,10-methenyltetrahydrofolate + H2O = (6R)-10-formyltetrahydrofolate + H(+). It functions in the pathway one-carbon metabolism; tetrahydrofolate interconversion. Catalyzes the oxidation of 5,10-methylenetetrahydrofolate to 5,10-methenyltetrahydrofolate and then the hydrolysis of 5,10-methenyltetrahydrofolate to 10-formyltetrahydrofolate. The chain is Bifunctional protein FolD from Kosmotoga olearia (strain ATCC BAA-1733 / DSM 21960 / TBF 19.5.1).